A 673-amino-acid chain; its full sequence is ATP-dependent zinc metalloprotease FtsH (673 aa).

The Cytoplasmic segment spans residues 1-7; the sequence is MNGFFKN. A helical membrane pass occupies residues 8-28; it reads LSLWLVIGLLMVMLFNLFNSP. Topologically, residues 29 to 100 are periplasmic; the sequence is QGPGQSITFS…DVREPEGTPM (72 aa). Residues 101–121 traverse the membrane as a helical segment; sequence LMQILISWFPMLLLIAVWIYF. At 122–673 the chain is on the cytoplasmic side; it reads MRQMQSGGGR…DTPEGDDKDR (552 aa). 194-201 contacts ATP; sequence GPPGTGKT. His416 contacts Zn(2+). The active site involves Glu417. His420 and Asp492 together coordinate Zn(2+). Positions 601 to 673 are disordered; sequence ALKPLKKKDE…DTPEGDDKDR (73 aa). Positions 648–660 are enriched in polar residues; sequence STRTATEASTQEV. Residues 661 to 673 are compositionally biased toward basic and acidic residues; the sequence is VSKDTPEGDDKDR.

This sequence in the central section; belongs to the AAA ATPase family. The protein in the C-terminal section; belongs to the peptidase M41 family. In terms of assembly, homohexamer. The cofactor is Zn(2+).

The protein localises to the cell inner membrane. In terms of biological role, acts as a processive, ATP-dependent zinc metallopeptidase for both cytoplasmic and membrane proteins. Plays a role in the quality control of integral membrane proteins. The sequence is that of ATP-dependent zinc metalloprotease FtsH from Magnetococcus marinus (strain ATCC BAA-1437 / JCM 17883 / MC-1).